The primary structure comprises 156 residues: Small ribosomal subunit protein uS7 (156 aa).

The protein belongs to the universal ribosomal protein uS7 family. Part of the 30S ribosomal subunit. Contacts proteins S9 and S11.

Functionally, one of the primary rRNA binding proteins, it binds directly to 16S rRNA where it nucleates assembly of the head domain of the 30S subunit. Is located at the subunit interface close to the decoding center, probably blocks exit of the E-site tRNA. This Acetivibrio thermocellus (strain ATCC 27405 / DSM 1237 / JCM 9322 / NBRC 103400 / NCIMB 10682 / NRRL B-4536 / VPI 7372) (Clostridium thermocellum) protein is Small ribosomal subunit protein uS7.